The chain runs to 390 residues: GTPase Obg (390 aa).

Residues 1 to 159 (MKFIDEALIR…RDLQLELMLL (159 aa)) enclose the Obg domain. The region spanning 160–333 (ADVGMLGLPN…LCRDIMDFIE (174 aa)) is the OBG-type G domain. GTP-binding positions include 166-173 (GLPNAGKS), 191-195 (FTTLV), 213-216 (DIPG), 283-286 (NKID), and 314-316 (SAV). Positions 173 and 193 each coordinate Mg(2+). Residues 363–390 (DHQFEDEDEDWDDWSEEDEEGVETIYKP) form a disordered region. A compositionally biased stretch (acidic residues) spans 366-384 (FEDEDEDWDDWSEEDEEGV).

It belongs to the TRAFAC class OBG-HflX-like GTPase superfamily. OBG GTPase family. Monomer. Mg(2+) serves as cofactor.

It localises to the cytoplasm. Its function is as follows. An essential GTPase which binds GTP, GDP and possibly (p)ppGpp with moderate affinity, with high nucleotide exchange rates and a fairly low GTP hydrolysis rate. Plays a role in control of the cell cycle, stress response, ribosome biogenesis and in those bacteria that undergo differentiation, in morphogenesis control. The protein is GTPase Obg of Pasteurella multocida (strain Pm70).